Here is a 204-residue protein sequence, read N- to C-terminus: LexA repressor (204 aa).

The segment at residues 28-48 (VREIGEAVGLASSSTVHGHLD) is a DNA-binding region (H-T-H motif). Residues Ser126 and Lys164 each act as for autocatalytic cleavage activity in the active site.

The protein belongs to the peptidase S24 family. As to quaternary structure, homodimer.

It carries out the reaction Hydrolysis of Ala-|-Gly bond in repressor LexA.. In terms of biological role, represses a number of genes involved in the response to DNA damage (SOS response), including recA and lexA. In the presence of single-stranded DNA, RecA interacts with LexA causing an autocatalytic cleavage which disrupts the DNA-binding part of LexA, leading to derepression of the SOS regulon and eventually DNA repair. This chain is LexA repressor, found in Exiguobacterium sibiricum (strain DSM 17290 / CCUG 55495 / CIP 109462 / JCM 13490 / 255-15).